Reading from the N-terminus, the 233-residue chain is Large ribosomal subunit protein uL1 (233 aa).

This sequence belongs to the universal ribosomal protein uL1 family. In terms of assembly, part of the 50S ribosomal subunit.

Its function is as follows. Binds directly to 23S rRNA. The L1 stalk is quite mobile in the ribosome, and is involved in E site tRNA release. Protein L1 is also a translational repressor protein, it controls the translation of the L11 operon by binding to its mRNA. In Polynucleobacter asymbioticus (strain DSM 18221 / CIP 109841 / QLW-P1DMWA-1) (Polynucleobacter necessarius subsp. asymbioticus), this protein is Large ribosomal subunit protein uL1.